Here is a 151-residue protein sequence, read N- to C-terminus: Probable ubiquitin-conjugating enzyme E2 W-B (151 aa).

A UBC core domain is found at 3–151 (SMQKRLQKEL…TKWWYHDDTC (149 aa)). Cysteine 91 acts as the Glycyl thioester intermediate in catalysis.

The protein belongs to the ubiquitin-conjugating enzyme family.

The protein localises to the nucleus. It carries out the reaction S-ubiquitinyl-[E1 ubiquitin-activating enzyme]-L-cysteine + [E2 ubiquitin-conjugating enzyme]-L-cysteine = [E1 ubiquitin-activating enzyme]-L-cysteine + S-ubiquitinyl-[E2 ubiquitin-conjugating enzyme]-L-cysteine.. The enzyme catalyses S-ubiquitinyl-[E1 ubiquitin-activating enzyme]-L-cysteine + [acceptor protein]-N-terminal-amino acid = [E1 ubiquitin-activating enzyme]-L-cysteine + N-terminal-ubiquitinyl-[acceptor protein].. It participates in protein modification; protein ubiquitination. Its function is as follows. Accepts ubiquitin from the E1 complex and catalyzes its covalent attachment to other proteins. Catalyzes monoubiquitination. Involved in degradation of misfolded chaperone substrate and DNA repair. In Danio rerio (Zebrafish), this protein is Probable ubiquitin-conjugating enzyme E2 W-B (ube2wb).